The primary structure comprises 266 residues: Undecaprenyl-diphosphatase (266 aa).

A run of 8 helical transmembrane segments spans residues M1–G21, F43–I63, L81–I101, V109–V129, L159–G179, P183–L203, Y219–M239, and S246–Y266.

This sequence belongs to the UppP family.

It is found in the cell inner membrane. The catalysed reaction is di-trans,octa-cis-undecaprenyl diphosphate + H2O = di-trans,octa-cis-undecaprenyl phosphate + phosphate + H(+). Functionally, catalyzes the dephosphorylation of undecaprenyl diphosphate (UPP). Confers resistance to bacitracin. In Fusobacterium nucleatum subsp. nucleatum (strain ATCC 25586 / DSM 15643 / BCRC 10681 / CIP 101130 / JCM 8532 / KCTC 2640 / LMG 13131 / VPI 4355), this protein is Undecaprenyl-diphosphatase.